The primary structure comprises 659 residues: Acetyl-coenzyme A synthetase (659 aa).

Residues 206-209 and Thr-324 contribute to the CoA site; that span reads RRGK. ATP is bound by residues 400 to 402, 424 to 429, Asp-516, Arg-531, and Arg-542; these read GEP and DTWWQT. Residues Val-553 and His-555 each contribute to the Mg(2+) site. A CoA-binding site is contributed by Arg-600.

Belongs to the ATP-dependent AMP-binding enzyme family. The cofactor is Mg(2+).

The catalysed reaction is acetate + ATP + CoA = acetyl-CoA + AMP + diphosphate. In terms of biological role, catalyzes the conversion of acetate into acetyl-CoA (AcCoA), an essential intermediate at the junction of anabolic and catabolic pathways. AcsA undergoes a two-step reaction. In the first half reaction, AcsA combines acetate with ATP to form acetyl-adenylate (AcAMP) intermediate. In the second half reaction, it can then transfer the acetyl group from AcAMP to the sulfhydryl group of CoA, forming the product AcCoA. This is Acetyl-coenzyme A synthetase (acsA) from Methanothrix thermoacetophila (strain DSM 6194 / JCM 14653 / NBRC 101360 / PT) (Methanosaeta thermophila).